Consider the following 349-residue polypeptide: MEFLQGILGTDAGLLVWTLLKIIAIVLPMLGCVAYLTLAERKVIGYMQIRIGPNRVGPFGLLQPIADAVKLLMKEIILPTNSSKGLFLLAPVLSIGPALAAWAVIPFTDKLVLANVNASLLYILALTSMGVYGVIIAGWAGNSKYSFLGAMRSAAQIVSYELAMGFALVGVLMVSGSLNLVDIVHQQSFGKGGGSILSWNWIPLFPLFIVYLISGVAETNRAPFDVAEGESEIVAGFHVEYSGMAFAIFFLAEYANMILVAALTSLLFLGGWLSPFPASWGILGAGGFFWLAVKMALVLFCFLWFRATFPRYRYDQIMRLGWKVFIPVTLVWILVVGAWMFSPLSIWKL.

8 helical membrane-spanning segments follow: residues 14-34, 85-105, 120-140, 164-184, 196-216, 243-263, 285-305, and 324-344; these read LLVW…GCVA, GLFL…WAVI, LLYI…AGWA, MGFA…VDIV, ILSW…ISGV, GMAF…VAAL, AGGF…FLWF, and VFIP…FSPL.

The protein belongs to the complex I subunit 1 family. NDH-1 is composed of 14 different subunits. Subunits NuoA, H, J, K, L, M, N constitute the membrane sector of the complex.

The protein resides in the cell inner membrane. It carries out the reaction a quinone + NADH + 5 H(+)(in) = a quinol + NAD(+) + 4 H(+)(out). In terms of biological role, NDH-1 shuttles electrons from NADH, via FMN and iron-sulfur (Fe-S) centers, to quinones in the respiratory chain. The immediate electron acceptor for the enzyme in this species is believed to be ubiquinone. Couples the redox reaction to proton translocation (for every two electrons transferred, four hydrogen ions are translocated across the cytoplasmic membrane), and thus conserves the redox energy in a proton gradient. This subunit may bind ubiquinone. The polypeptide is NADH-quinone oxidoreductase subunit H (Chromobacterium violaceum (strain ATCC 12472 / DSM 30191 / JCM 1249 / CCUG 213 / NBRC 12614 / NCIMB 9131 / NCTC 9757 / MK)).